The primary structure comprises 141 residues: Nucleoside diphosphate kinase (141 aa).

Residues Lys-11, Phe-59, Arg-87, Thr-93, Arg-104, and Asn-114 each coordinate ATP. His-117 (pros-phosphohistidine intermediate) is an active-site residue.

It belongs to the NDK family. In terms of assembly, homotetramer. Mg(2+) is required as a cofactor.

Its subcellular location is the cytoplasm. It catalyses the reaction a 2'-deoxyribonucleoside 5'-diphosphate + ATP = a 2'-deoxyribonucleoside 5'-triphosphate + ADP. The enzyme catalyses a ribonucleoside 5'-diphosphate + ATP = a ribonucleoside 5'-triphosphate + ADP. Functionally, major role in the synthesis of nucleoside triphosphates other than ATP. The ATP gamma phosphate is transferred to the NDP beta phosphate via a ping-pong mechanism, using a phosphorylated active-site intermediate. This is Nucleoside diphosphate kinase from Xylella fastidiosa (strain 9a5c).